The chain runs to 525 residues: G-protein regulator 1 (525 aa).

Residues 424-445 (PVDMMDLIFSMSSRMDDQRTEL) form the GoLoco domain. The disordered stretch occupies residues 488-525 (HTMNRILKRSKKSKSSLDSTNSMQGDDTRSDDVTMTSK).

As to quaternary structure, interacts with gpr-1, lin-5 and GDP-bound goa-1.

It is found in the cytoplasm. Its subcellular location is the cell cortex. The protein localises to the cytoskeleton. The protein resides in the spindle. Functionally, in the 1-cell embryo, probably together with gpr-2, controls nuclear rotation and spindle elongation during mitosis. Complex of gpr-1 and gpr-2, in association with lin-5, activates G-protein signaling to affect mitotic spindle force. Polarity determinants (par genes) may regulate lin-5/gpr-1/gpr-2/goa-1 locally to create the asymmetric forces that drive spindle movement. This chain is G-protein regulator 1 (gpr-1), found in Caenorhabditis elegans.